The sequence spans 431 residues: Glucose-1-phosphate adenylyltransferase (431 aa).

Alpha-D-glucose 1-phosphate is bound by residues Tyr108, Gly174, 189 to 190 (EK), and Ser207.

Belongs to the bacterial/plant glucose-1-phosphate adenylyltransferase family. In terms of assembly, homotetramer.

The enzyme catalyses alpha-D-glucose 1-phosphate + ATP + H(+) = ADP-alpha-D-glucose + diphosphate. Its pathway is glycan biosynthesis; glycogen biosynthesis. Its function is as follows. Involved in the biosynthesis of ADP-glucose, a building block required for the elongation reactions to produce glycogen. Catalyzes the reaction between ATP and alpha-D-glucose 1-phosphate (G1P) to produce pyrophosphate and ADP-Glc. This Actinobacillus succinogenes (strain ATCC 55618 / DSM 22257 / CCUG 43843 / 130Z) protein is Glucose-1-phosphate adenylyltransferase.